Reading from the N-terminus, the 1096-residue chain is Constitutive coactivator of PPAR-gamma-like protein 2 (1096 aa).

A compositionally biased stretch (low complexity) spans 35–59 (QQQHLHRQLPPTAALAPGAPRAARG). 3 disordered regions span residues 35–113 (QQQH…PPQL), 508–579 (NYLP…DGEP), and 971–1096 (SRSS…RKED). Position 58 is an omega-N-methylarginine (Arg-58). Residues 82 to 95 (TRHHHPAHHFHHHG) show a composition bias toward basic residues. The span at 101–113 (LHPPLPPPPPPQL) shows a compositional bias: pro residues. Positions 540–559 (HITEAFHHQPEWGNPNRDRG) are enriched in basic and acidic residues. Arg-977 is modified (omega-N-methylarginine). Basic and acidic residues-rich tracts occupy residues 1041–1050 (IKEEKSDHRL) and 1076–1096 (NREK…RKED). A Glycyl lysine isopeptide (Lys-Gly) (interchain with G-Cter in SUMO2) cross-link involves residue Lys-1042.

The protein belongs to the constitutive coactivator of PPAR-gamma family. In terms of tissue distribution, expressed at low levels in a number of tissues.

The protein is Constitutive coactivator of PPAR-gamma-like protein 2 (FAM120C) of Homo sapiens (Human).